A 225-amino-acid chain; its full sequence is Type II restriction enzyme BslI subunit alpha (225 aa).

2 consecutive C4-type zinc fingers follow at residues 36–53 (CKDC…CYFC) and 63–84 (CNSC…TDGC).

In terms of assembly, heterotetramer of two alpha and two beta subunits. The alpha subunit is believed to be responsible for DNA recognition, while the beta subunit is thought to mediate cleavage. Zn(2+) is required as a cofactor.

It carries out the reaction Endonucleolytic cleavage of DNA to give specific double-stranded fragments with terminal 5'-phosphates.. Functionally, a P subtype restriction enzyme that recognizes the double-stranded sequence 5'-CCN(7)GG-3' and cleaves after N-7. In Bacillus sp. (strain NEB-606), this protein is Type II restriction enzyme BslI subunit alpha.